The primary structure comprises 350 residues: UDP-N-acetylenolpyruvoylglucosamine reductase (350 aa).

One can recognise an FAD-binding PCMH-type domain in the interval 24–195 (HVEATARWLL…VAVEFNLPLL (172 aa)). The active site involves Arg-172. Ser-245 acts as the Proton donor in catalysis. The active site involves Glu-342.

It belongs to the MurB family. FAD is required as a cofactor.

It is found in the cytoplasm. It carries out the reaction UDP-N-acetyl-alpha-D-muramate + NADP(+) = UDP-N-acetyl-3-O-(1-carboxyvinyl)-alpha-D-glucosamine + NADPH + H(+). It functions in the pathway cell wall biogenesis; peptidoglycan biosynthesis. Cell wall formation. This Xanthomonas oryzae pv. oryzae (strain MAFF 311018) protein is UDP-N-acetylenolpyruvoylglucosamine reductase.